The following is a 506-amino-acid chain: Ribose import ATP-binding protein RbsA 2 (506 aa).

ABC transporter domains follow at residues 6-241 (LSMT…VGRV) and 254-499 (EKSN…SITI). 38 to 45 (GENGAGKS) provides a ligand contact to ATP.

This sequence belongs to the ABC transporter superfamily. Ribose importer (TC 3.A.1.2.1) family. As to quaternary structure, the complex is composed of an ATP-binding protein (RbsA), two transmembrane proteins (RbsC) and a solute-binding protein (RbsB).

Its subcellular location is the cell inner membrane. It carries out the reaction D-ribose(out) + ATP + H2O = D-ribose(in) + ADP + phosphate + H(+). In terms of biological role, part of the ABC transporter complex RbsABC involved in ribose import. Responsible for energy coupling to the transport system. This Agrobacterium fabrum (strain C58 / ATCC 33970) (Agrobacterium tumefaciens (strain C58)) protein is Ribose import ATP-binding protein RbsA 2.